The sequence spans 411 residues: GTPase Obg (411 aa).

Positions 1 to 157 (MQFIDEARFV…REIRLELRVL (157 aa)) constitute an Obg domain. Residues 20 to 45 (AVSFHREKYRPRGGPDGGRGGDGGSV) form a disordered region. Gly residues predominate over residues 33–43 (GPDGGRGGDGG). The region spanning 158-330 (SDVGLVGLPN…LERSAEAAPR (173 aa)) is the OBG-type G domain. GTP is bound by residues 164-171 (GLPNAGKS), 189-193 (FTTLT), 212-215 (DIPG), 276-279 (NKVD), and 311-313 (ARL). 2 residues coordinate Mg(2+): serine 171 and threonine 191. The region spanning 335-411 (VFRPSWRGLR…RIGDVSFEFR (77 aa)) is the OCT domain.

It belongs to the TRAFAC class OBG-HflX-like GTPase superfamily. OBG GTPase family. Monomer. Mg(2+) is required as a cofactor.

The protein resides in the cytoplasm. In terms of biological role, an essential GTPase which binds GTP, GDP and possibly (p)ppGpp with moderate affinity, with high nucleotide exchange rates and a fairly low GTP hydrolysis rate. Plays a role in control of the cell cycle, stress response, ribosome biogenesis and in those bacteria that undergo differentiation, in morphogenesis control. In Rubrobacter xylanophilus (strain DSM 9941 / JCM 11954 / NBRC 16129 / PRD-1), this protein is GTPase Obg.